We begin with the raw amino-acid sequence, 160 residues long: Small ribosomal subunit protein uS17z (160 aa).

The protein belongs to the universal ribosomal protein uS17 family.

It is found in the cytoplasm. This Arabidopsis thaliana (Mouse-ear cress) protein is Small ribosomal subunit protein uS17z (RPS11A).